The primary structure comprises 193 residues: Holliday junction branch migration complex subunit RuvA (193 aa).

Positions 1–64 (MIGRIQGTLV…EDAQQLFGFA (64 aa)) are domain I. Positions 65 to 139 (TEIEREAFRQ…GKLAPDLGIT (75 aa)) are domain II. The tract at residues 139–143 (TGGKP) is flexible linker. Residues 144 to 193 (QAIEATSEVLQALLSLGYSEKEALLALKQIPPETSVSDGIRMGLKYLSKP) form a domain III region.

The protein belongs to the RuvA family. As to quaternary structure, homotetramer. Forms an RuvA(8)-RuvB(12)-Holliday junction (HJ) complex. HJ DNA is sandwiched between 2 RuvA tetramers; dsDNA enters through RuvA and exits via RuvB. An RuvB hexamer assembles on each DNA strand where it exits the tetramer. Each RuvB hexamer is contacted by two RuvA subunits (via domain III) on 2 adjacent RuvB subunits; this complex drives branch migration. In the full resolvosome a probable DNA-RuvA(4)-RuvB(12)-RuvC(2) complex forms which resolves the HJ.

It localises to the cytoplasm. Functionally, the RuvA-RuvB-RuvC complex processes Holliday junction (HJ) DNA during genetic recombination and DNA repair, while the RuvA-RuvB complex plays an important role in the rescue of blocked DNA replication forks via replication fork reversal (RFR). RuvA specifically binds to HJ cruciform DNA, conferring on it an open structure. The RuvB hexamer acts as an ATP-dependent pump, pulling dsDNA into and through the RuvAB complex. HJ branch migration allows RuvC to scan DNA until it finds its consensus sequence, where it cleaves and resolves the cruciform DNA. This is Holliday junction branch migration complex subunit RuvA from Polynucleobacter asymbioticus (strain DSM 18221 / CIP 109841 / QLW-P1DMWA-1) (Polynucleobacter necessarius subsp. asymbioticus).